Consider the following 29-residue polypeptide: ShK homolog Ask132958 (29 aa).

A ShKT domain is found at 1-29 (CENTISGCSRADCLLTHRKQGCQKTCGLC). Cystine bridges form between Cys-1-Cys-29, Cys-8-Cys-22, and Cys-13-Cys-26.

It belongs to the sea anemone type 1 potassium channel toxin family. Type 1a subfamily.

The protein localises to the secreted. It is found in the nematocyst. In terms of biological role, this peptide is similar to the potassium channel toxin ShK, but does not show activity on potassium channels. It appears that Lys-19, which is expected to occupy the pore of the channel, is not sufficiently accessible for binding, and therefore that this peptide must have a distinct functional role that does not involve potassium channels. It is noteworthy that this peptide is much more stable in the presence of trypsin, chymotrypsin and pepsin than the toxin ShK. The polypeptide is ShK homolog Ask132958 (Anemonia sulcata (Mediterranean snakelocks sea anemone)).